The chain runs to 610 residues: Zinc metalloproteinase-disintegrin-like 3a (610 aa).

The first 19 residues, 1-19, serve as a signal peptide directing secretion; that stretch reads MIQVLLVTILAVFPYQGSS. A propeptide spanning residues 20–188 is cleaved from the precursor; it reads IILGSGNVND…KKASQLVVTA (169 aa). The region spanning 198-394 is the Peptidase M12B domain; that stretch reads RYVELVIVAD…YTPKCILNEP (197 aa). Glu-201 contributes to the Ca(2+) binding site. The N-linked (GlcNAc...) asparagine glycan is linked to Asn-217. Asp-285 lines the Ca(2+) pocket. Intrachain disulfides connect Cys-309-Cys-389, Cys-349-Cys-373, and Cys-351-Cys-356. His-334 contributes to the Zn(2+) binding site. Residue Glu-335 is part of the active site. Residues His-338 and His-344 each contribute to the Zn(2+) site. Positions 389, 392, 404, 407, 411, 414, and 417 each coordinate Ca(2+). One can recognise a Disintegrin domain in the interval 402–488; it reads PPVCGNELLE…DCPTDDFHKN (87 aa). Disulfide bonds link Cys-405/Cys-434, Cys-416/Cys-429, Cys-418/Cys-424, Cys-428/Cys-451, Cys-442/Cys-448, Cys-447/Cys-473, Cys-460/Cys-480, Cys-467/Cys-499, Cys-492/Cys-504, Cys-511/Cys-561, Cys-526/Cys-572, Cys-539/Cys-549, Cys-556/Cys-598, and Cys-592/Cys-603. A D/ECD-tripeptide motif is present at residues 466-468; sequence ECD.

This sequence belongs to the venom metalloproteinase (M12B) family. P-III subfamily. It depends on Zn(2+) as a cofactor. In terms of tissue distribution, expressed by the venom gland.

It localises to the secreted. Functionally, snake venom metalloproteinase that impairs hemostasis in the envenomed animal. The protein is Zinc metalloproteinase-disintegrin-like 3a of Crotalus adamanteus (Eastern diamondback rattlesnake).